Here is a 424-residue protein sequence, read N- to C-terminus: Anaerobic glycerol-3-phosphate dehydrogenase subunit B (424 aa).

This sequence belongs to the anaerobic G-3-P dehydrogenase subunit B family. As to quaternary structure, composed of a catalytic GlpA/B dimer and of membrane bound GlpC. FMN is required as a cofactor.

The catalysed reaction is a quinone + sn-glycerol 3-phosphate = dihydroxyacetone phosphate + a quinol. It functions in the pathway polyol metabolism; glycerol degradation via glycerol kinase pathway; glycerone phosphate from sn-glycerol 3-phosphate (anaerobic route): step 1/1. Its function is as follows. Conversion of glycerol 3-phosphate to dihydroxyacetone. Uses fumarate or nitrate as electron acceptor. This is Anaerobic glycerol-3-phosphate dehydrogenase subunit B from Yersinia pseudotuberculosis serotype I (strain IP32953).